The chain runs to 147 residues: Protein PBDC1 homolog (147 aa).

It belongs to the PBDC1 family.

The protein resides in the cytoplasm. It is found in the nucleus. This chain is Protein PBDC1 homolog, found in Schizosaccharomyces pombe (strain 972 / ATCC 24843) (Fission yeast).